Here is a 308-residue protein sequence, read N- to C-terminus: Coenzyme PQQ synthesis protein B (308 aa).

The protein belongs to the PqqB family.

It participates in cofactor biosynthesis; pyrroloquinoline quinone biosynthesis. In terms of biological role, may be involved in the transport of PQQ or its precursor to the periplasm. The sequence is that of Coenzyme PQQ synthesis protein B from Rhodopseudomonas palustris (strain TIE-1).